Here is a 560-residue protein sequence, read N- to C-terminus: Eukaryotic translation initiation factor 3 subunit D-1 (560 aa).

The interval 98–166 (VQKPPHQRGR…RGPPPKMRES (69 aa)) is disordered. Residues 100–121 (KPPHQRGRFRNMRNSRSGRGRN) show a composition bias toward basic residues. Thr128 is modified (phosphothreonine). Over residues 147–156 (GRGMGKKFGH) the composition is skewed to basic residues. The segment at 291–305 (EFDLLTVNESSVEPP) is RNA gate.

Belongs to the eIF-3 subunit D family. Component of the eukaryotic translation initiation factor 3 (eIF-3) complex. The eIF-3 complex interacts with pix.

The protein resides in the cytoplasm. MRNA cap-binding component of the eukaryotic translation initiation factor 3 (eIF-3) complex, which is involved in protein synthesis of a specialized repertoire of mRNAs and, together with other initiation factors, stimulates binding of mRNA and methionyl-tRNAi to the 40S ribosome. The eIF-3 complex specifically targets and initiates translation of a subset of mRNAs involved in cell proliferation. In the eIF-3 complex, eif3d specifically recognizes and binds the 7-methylguanosine cap of a subset of mRNAs. The polypeptide is Eukaryotic translation initiation factor 3 subunit D-1 (Drosophila yakuba (Fruit fly)).